The chain runs to 559 residues: Glucans biosynthesis protein G (559 aa).

Positions 1 to 37 (MVSLLSCGTSASSHIVKKALTRLSLAMAAGLCFNLAA) are cleaved as a signal peptide.

The protein belongs to the OpgD/OpgG family.

Its subcellular location is the periplasm. It functions in the pathway glycan metabolism; osmoregulated periplasmic glucan (OPG) biosynthesis. Involved in the biosynthesis of osmoregulated periplasmic glucans (OPGs). The sequence is that of Glucans biosynthesis protein G from Shewanella frigidimarina (strain NCIMB 400).